The sequence spans 409 residues: Probable sodium/metabolite cotransporter BASS6, chloroplastic (409 aa).

Residues 1–49 (MSVITTPIETLHLKSTLRLLPRAVYRSQRIQVFPPNIFSNTSLSSPLRI) constitute a chloroplast transit peptide. Transmembrane regions (helical) follow at residues 100–120 (ILPHVVLASTILALIYPPSFT), 121–141 (WFTSRYFVPALGFLMFAVGIN), 170–190 (VLGFIFGLAAVSLFQLPTPIG), 191–211 (AGIMLVSCVSGAQLSNYATFL), 221–241 (IVMTSLSTATAVLVTPMLSLL), 253–273 (GMISSILQVVIAPIAAGLLLN), 285–305 (PFLPILSVLDTACCVGAPLAL), 316–336 (ATILLLVTMFHLSAFLAGYFL), and 381–401 (IPPAISTVVMSLMGFTLVLIW).

Belongs to the bile acid:sodium symporter (BASS) (TC 2.A.28) family.

The protein localises to the membrane. The protein resides in the plastid. It localises to the chloroplast envelope. Its function is as follows. May function as sodium-coupled metabolite transporter across the chloroplast envelope. The polypeptide is Probable sodium/metabolite cotransporter BASS6, chloroplastic (BASS6) (Arabidopsis thaliana (Mouse-ear cress)).